The following is a 526-amino-acid chain: Exodeoxyribonuclease 7 large subunit (526 aa).

Positions 496 to 526 are disordered; that stretch reads GAMTTEGGTPPAGAKKRSAKPADPTKQGSLF.

This sequence belongs to the XseA family. Heterooligomer composed of large and small subunits.

The protein resides in the cytoplasm. The catalysed reaction is Exonucleolytic cleavage in either 5'- to 3'- or 3'- to 5'-direction to yield nucleoside 5'-phosphates.. Bidirectionally degrades single-stranded DNA into large acid-insoluble oligonucleotides, which are then degraded further into small acid-soluble oligonucleotides. The protein is Exodeoxyribonuclease 7 large subunit of Rhizobium etli (strain CIAT 652).